We begin with the raw amino-acid sequence, 430 residues long: Adenylosuccinate synthetase (430 aa).

GTP is bound by residues 12 to 18 and 40 to 42; these read GDEGKGK and GHT. The Proton acceptor role is filled by Asp-13. Mg(2+) contacts are provided by Asp-13 and Gly-40. Residues 13–16, 38–41, Thr-130, Arg-144, Gln-224, Thr-239, and Arg-303 each bind IMP; these read DEGK and NAGH. His-41 functions as the Proton donor in the catalytic mechanism. 299-305 contacts substrate; the sequence is TTTGRKR. GTP contacts are provided by residues Arg-305, 331–333, and 413–415; these read KLD and STS.

It belongs to the adenylosuccinate synthetase family. In terms of assembly, homodimer. It depends on Mg(2+) as a cofactor.

It is found in the cytoplasm. The catalysed reaction is IMP + L-aspartate + GTP = N(6)-(1,2-dicarboxyethyl)-AMP + GDP + phosphate + 2 H(+). Its pathway is purine metabolism; AMP biosynthesis via de novo pathway; AMP from IMP: step 1/2. Functionally, plays an important role in the de novo pathway of purine nucleotide biosynthesis. Catalyzes the first committed step in the biosynthesis of AMP from IMP. The protein is Adenylosuccinate synthetase of Ruegeria pomeroyi (strain ATCC 700808 / DSM 15171 / DSS-3) (Silicibacter pomeroyi).